A 122-amino-acid chain; its full sequence is MARIAGINIPDHKHAVIALTAIYGIGKTRSQAICAAAGIAEDVKIRELSEEQIDKLRDEVGKFTVEGDLRREVTLNIKRLLDLGCYRGLRHRRSLPVRGQRTKTNARTRKVHVSRSKNSRGK.

The segment at 94-122 is disordered; sequence SLPVRGQRTKTNARTRKVHVSRSKNSRGK.

The protein belongs to the universal ribosomal protein uS13 family. Part of the 30S ribosomal subunit. Forms a loose heterodimer with protein S19. Forms two bridges to the 50S subunit in the 70S ribosome.

Functionally, located at the top of the head of the 30S subunit, it contacts several helices of the 16S rRNA. In the 70S ribosome it contacts the 23S rRNA (bridge B1a) and protein L5 of the 50S subunit (bridge B1b), connecting the 2 subunits; these bridges are implicated in subunit movement. Contacts the tRNAs in the A and P-sites. In Haemophilus influenzae (strain ATCC 51907 / DSM 11121 / KW20 / Rd), this protein is Small ribosomal subunit protein uS13.